Here is a 189-residue protein sequence, read N- to C-terminus: UPF0312 protein VPA0850 (189 aa).

A signal peptide spans 1-22 (MKKSLFATGLAIAMALPLGAQA).

It belongs to the UPF0312 family. Type 1 subfamily.

The protein resides in the periplasm. In Vibrio parahaemolyticus serotype O3:K6 (strain RIMD 2210633), this protein is UPF0312 protein VPA0850.